Consider the following 373-residue polypeptide: Peptide chain release factor 2 (373 aa).

Residue Gln252 is modified to N5-methylglutamine.

The protein belongs to the prokaryotic/mitochondrial release factor family. Post-translationally, methylated by PrmC. Methylation increases the termination efficiency of RF2.

It is found in the cytoplasm. Peptide chain release factor 2 directs the termination of translation in response to the peptide chain termination codons UGA and UAA. This is Peptide chain release factor 2 from Staphylococcus saprophyticus subsp. saprophyticus (strain ATCC 15305 / DSM 20229 / NCIMB 8711 / NCTC 7292 / S-41).